The primary structure comprises 255 residues: Pimeloyl-[acyl-carrier protein] methyl ester esterase (255 aa).

The region spanning 16 to 241 (LVLLHGWGMN…QSSHAPFMTE (226 aa)) is the AB hydrolase-1 domain. Residues Trp22, 82 to 83 (SL), and 143 to 147 (FMALQ) each bind substrate. Ser82 functions as the Nucleophile in the catalytic mechanism. Residues Asp207 and His235 contribute to the active site. His235 lines the substrate pocket.

The protein belongs to the AB hydrolase superfamily. Carboxylesterase BioH family. As to quaternary structure, monomer.

It localises to the cytoplasm. The catalysed reaction is 6-carboxyhexanoyl-[ACP] methyl ester + H2O = 6-carboxyhexanoyl-[ACP] + methanol + H(+). It participates in cofactor biosynthesis; biotin biosynthesis. Functionally, the physiological role of BioH is to remove the methyl group introduced by BioC when the pimeloyl moiety is complete. It allows to synthesize pimeloyl-ACP via the fatty acid synthetic pathway through the hydrolysis of the ester bonds of pimeloyl-ACP esters. The protein is Pimeloyl-[acyl-carrier protein] methyl ester esterase of Vibrio parahaemolyticus serotype O3:K6 (strain RIMD 2210633).